The primary structure comprises 628 residues: Pinene synthase, chloroplastic (628 aa).

The transit peptide at 1-36 (MALVSTAPLASKSCLHKSLISSTHELKALSRTIPAL) directs the protein to the chloroplast. The Mg(2+) site is built by Asp379, Asp383, and Asp531. The DDXXD motif signature appears at 379-383 (DDMYD).

Belongs to the terpene synthase family. Tpsd subfamily. Mg(2+) serves as cofactor. The cofactor is Mn(2+). It depends on K(+) as a cofactor.

Its subcellular location is the plastid. The protein localises to the chloroplast. The enzyme catalyses (2E)-geranyl diphosphate = (1S,5S)-alpha-pinene + diphosphate. The catalysed reaction is (2E)-geranyl diphosphate = (1S,5S)-beta-pinene + diphosphate. It functions in the pathway terpene metabolism; oleoresin biosynthesis. In terms of biological role, involved in defensive oleoresin formation in conifers in response to insect attack or other injury. Involved in monoterpene (C10) olefins biosynthesis. A mixture of alpha- and beta-pinene is produced by this enzyme. This is Pinene synthase, chloroplastic (ag3) from Abies grandis (Grand fir).